The following is an 838-amino-acid chain: Kinesin-like protein KIFC2 (838 aa).

Low complexity predominate over residues 23–32 (AAAAEPGDPA). Disordered regions lie at residues 23–48 (AAAAEPGDPAQRARKPRGRRRPDLPA) and 140–185 (LLQG…GQQP). A compositionally biased stretch (polar residues) spans 156 to 167 (DGSTSQEESPSH). Positions 186 to 351 (LQLEEDQRAW…SLRQGCGDLR (166 aa)) form a coiled coil. The Kinesin motor domain maps to 409–740 (NIRVLCRLRP…ARRSPRGRRI (332 aa)). Residue 484–491 (GQTGTGKT) participates in ATP binding. A disordered region spans residues 718 to 792 (RSPPTRARPP…SPGPPAPLRR (75 aa)).

It belongs to the TRAFAC class myosin-kinesin ATPase superfamily. Kinesin family.

It is found in the cytoplasm. The protein resides in the cytoskeleton. In terms of biological role, may play a role in microtubule-dependent retrograde axonal transport. May function as the motor for the transport of multivesicular body (MVB)-like organelles in dendrites. The sequence is that of Kinesin-like protein KIFC2 (KIFC2) from Homo sapiens (Human).